Consider the following 593-residue polypeptide: NADH-quinone oxidoreductase subunit C/D (593 aa).

Positions 1–184 are NADH dehydrogenase I subunit C; that stretch reads MTADTAVSIP…DPFSLTLAKQ (184 aa). An NADH dehydrogenase I subunit D region spans residues 208-593; it reads DYMFLNLGPN…IDFVMADVDR (386 aa).

This sequence in the N-terminal section; belongs to the complex I 30 kDa subunit family. It in the C-terminal section; belongs to the complex I 49 kDa subunit family. NDH-1 is composed of 13 different subunits. Subunits NuoB, CD, E, F, and G constitute the peripheral sector of the complex.

The protein localises to the cell inner membrane. It carries out the reaction a quinone + NADH + 5 H(+)(in) = a quinol + NAD(+) + 4 H(+)(out). Its function is as follows. NDH-1 shuttles electrons from NADH, via FMN and iron-sulfur (Fe-S) centers, to quinones in the respiratory chain. The immediate electron acceptor for the enzyme in this species is believed to be ubiquinone. Couples the redox reaction to proton translocation (for every two electrons transferred, four hydrogen ions are translocated across the cytoplasmic membrane), and thus conserves the redox energy in a proton gradient. The sequence is that of NADH-quinone oxidoreductase subunit C/D from Ectopseudomonas mendocina (strain ymp) (Pseudomonas mendocina).